We begin with the raw amino-acid sequence, 728 residues long: Putative ankyrin repeat protein L271 (728 aa).

2 ANK repeats span residues 142-171 (SDVN…NIKT) and 173-198 (IYSA…DIIL). Residues 244–267 (STKSTKSSGSPKSIKPKKSNQNNN) are compositionally biased toward low complexity. The interval 244–271 (STKSTKSSGSPKSIKPKKSNQNNNAKIN) is disordered. The stretch at 292 to 338 (TVDKMSSAKEQALNVYKEIENMENFILNKINITKKKALDKIKEIENI) forms a coiled coil. ANK repeat units lie at residues 358–383 (TNTD…RQGY), 384–414 (DINK…NYEQ), 477–510 (DDLS…NINS), 514–543 (IGRS…DYSF), 547–576 (NGDT…DTKT), 594–626 (DIKT…NVSS), 630–659 (TKKT…NINS), and 663–696 (LGKT…KILI).

The chain is Putative ankyrin repeat protein L271 from Acanthamoeba polyphaga (Amoeba).